The following is a 116-amino-acid chain: Protein Rev (116 aa).

A Phosphoserine; by host CK2 modification is found at Ser5. Residues 18–26 (IIRLLYQSN) are homomultimerization. The tract at residues 27 to 49 (PYPEPAGTRQAQRNRRRRWRARQ) is disordered. Positions 34-50 (TRQAQRNRRRRWRARQR) match the Nuclear localization signal and RNA-binding (RRE) motif. A compositionally biased stretch (basic residues) spans 38-49 (QRNRRRRWRARQ). The short motif at 73–84 (LQLPPLERLTLD) is the Nuclear export signal and binding to XPO1 element. Residues 86–116 (SEDCGTSGEKGVGSPQTSGESPAVLGTGAKE) are disordered. Phosphoserine; by host is present on residues Ser92 and Ser99.

It belongs to the HIV-1 REV protein family. Homomultimer; when bound to the RRE. Multimeric assembly is essential for activity and may involve XPO1. Binds to human KPNB1, XPO1, TNPO1, RANBP5 and IPO7. Interacts with the viral Integrase. Interacts with human KHDRBS1. Interacts with human NAP1; this interaction decreases Rev multimerization and stimulates its activity. Interacts with human DEAD-box helicases DDX3 and DDX24; these interactions may serve for viral RNA export to the cytoplasm and packaging, respectively. Interacts with human PSIP1; this interaction may inhibit HIV-1 DNA integration by promoting dissociation of the Integrase-LEDGF/p75 complex. Post-translationally, asymmetrically arginine dimethylated at one site by host PRMT6. Methylation impairs the RNA-binding activity and export of viral RNA from the nucleus to the cytoplasm. Phosphorylated by protein kinase CK2. Presence of, and maybe binding to the N-terminus of the regulatory beta subunit of CK2 is necessary for CK2-mediated Rev's phosphorylation.

Its subcellular location is the host nucleus. It is found in the host nucleolus. The protein localises to the host cytoplasm. In terms of biological role, escorts unspliced or incompletely spliced viral pre-mRNAs (late transcripts) out of the nucleus of infected cells. These pre-mRNAs carry a recognition sequence called Rev responsive element (RRE) located in the env gene, that is not present in fully spliced viral mRNAs (early transcripts). This function is essential since most viral proteins are translated from unspliced or partially spliced pre-mRNAs which cannot exit the nucleus by the pathway used by fully processed cellular mRNAs. Rev itself is translated from a fully spliced mRNA that readily exits the nucleus. Rev's nuclear localization signal (NLS) binds directly to KPNB1/Importin beta-1 without previous binding to KPNA1/Importin alpha-1. KPNB1 binds to the GDP bound form of RAN (Ran-GDP) and targets Rev to the nucleus. In the nucleus, the conversion from Ran-GDP to Ran-GTP dissociates Rev from KPNB1 and allows Rev's binding to the RRE in viral pre-mRNAs. Rev multimerization on the RRE via cooperative assembly exposes its nuclear export signal (NES) to the surface. Rev can then form a complex with XPO1/CRM1 and Ran-GTP, leading to nuclear export of the complex. Conversion from Ran-GTP to Ran-GDP mediates dissociation of the Rev/RRE/XPO1/RAN complex, so that Rev can return to the nucleus for a subsequent round of export. Beside KPNB1, also seems to interact with TNPO1/Transportin-1, RANBP5/IPO5 and IPO7/RANBP7 for nuclear import. The nucleoporin-like HRB/RIP is an essential cofactor that probably indirectly interacts with Rev to release HIV RNAs from the perinuclear region to the cytoplasm. The sequence is that of Protein Rev from Human immunodeficiency virus type 1 group M subtype H (isolate VI991) (HIV-1).